We begin with the raw amino-acid sequence, 171 residues long: MAVLQVLHFPDERLRTIAKPVHEVTPEIQRIVDDMFETMYAEEGIGLAATQVDIHQRIIVIDVSENRDQRLVLINPELLQHDGEAGIEEGCLSVPEQRALVTRAENIKVRALDRDGKSFELETDGLLAICIQHEMDHLMGKLFIDYLSPLKRQRIRQKLEKLYKQQARAVN.

Residues Cys91 and His133 each coordinate Fe cation. Glu134 is an active-site residue. A Fe cation-binding site is contributed by His137.

This sequence belongs to the polypeptide deformylase family. Fe(2+) is required as a cofactor.

The catalysed reaction is N-terminal N-formyl-L-methionyl-[peptide] + H2O = N-terminal L-methionyl-[peptide] + formate. Removes the formyl group from the N-terminal Met of newly synthesized proteins. Requires at least a dipeptide for an efficient rate of reaction. N-terminal L-methionine is a prerequisite for activity but the enzyme has broad specificity at other positions. The polypeptide is Peptide deformylase (Edwardsiella ictaluri (strain 93-146)).